A 301-amino-acid polypeptide reads, in one-letter code: Rhodopsin (301 aa).

Residues 1–18 (LHMIHLHWYQYPPMNPIM) are Extracellular-facing. Residues 19 to 43 (YPLLLVFMLITGILCLAGNFVTIWV) form a helical membrane-spanning segment. Residues 44–55 (FMNTKSLRTPAN) lie on the Cytoplasmic side of the membrane. Residues 56 to 78 (LLVVNLAMSDFLMMFTMFPPMMI) traverse the membrane as a helical segment. At 79 to 92 (TCYYHTWTLGATFC) the chain is on the extracellular side. A disulfide bridge links Cys-92 with Cys-169. The helical transmembrane segment at 93 to 115 (QVYAFLGNLCGCASIWTMVFITF) threads the bilayer. The 'Ionic lock' involved in activated form stabilization motif lies at 116 to 118 (DRY). Topologically, residues 116 to 134 (DRYNVIVKGVAGEPLSTKK) are cytoplasmic. A helical transmembrane segment spans residues 135–155 (ATLWILTIWILSTTWCVAPFF). Residues 156–182 (GWNRYVPEGNLTGCGTDYLSQDILSRS) lie on the Extracellular side of the membrane. Residue Asn-165 is glycosylated (N-linked (GlcNAc...) asparagine). The chain crosses the membrane as a helical span at residues 183 to 204 (YLYIYSTWVYFLPLAITIYCYV). At 205–245 (VIIKAVAAHEKGMRDQAKKMGIKSLRNEEAQKTSAECRLAK) the chain is on the cytoplasmic side. Residues 246-267 (IAMTTVALWFIAWTPYLLINWV) form a helical membrane-spanning segment. Over 268–278 (GMFARSYLSPV) the chain is Extracellular. A helical membrane pass occupies residues 279 to 300 (YTIWGYVFAKANAVYNPIVYAI). An N6-(retinylidene)lysine modification is found at Lys-288.

Belongs to the G-protein coupled receptor 1 family. Opsin subfamily. As to quaternary structure, homodimer. Interacts with GNAQ. In terms of processing, contains one covalently linked retinal chromophore.

It is found in the cell projection. Its subcellular location is the rhabdomere membrane. In terms of biological role, photoreceptor required for image-forming vision at low light intensity. Can use both retinal and 3-dehydroretinal as visual pigment. Light-induced isomerization of 11-cis to all-trans retinal triggers a conformational change that activates signaling via G-proteins. Signaling via GNAQ probably mediates the activation of phospholipase C. This chain is Rhodopsin (RHO), found in Orconectes australis (Southern cave crayfish).